The sequence spans 2531 residues: Highly reducing polyketide synthase ausV (2531 aa).

Residues 7–432 (STPIAIIGLS…GTNAHCVMET (426 aa)) enclose the Ketosynthase family 3 (KS3) domain. Active-site for beta-ketoacyl synthase activity residues include Cys-180, His-315, and His-355. Residues 554–882 (FVFTGQGAQW…HHTLLESMGS (329 aa)) are malonyl-CoA:ACP transacylase (MAT) domain. The active-site For malonyltransferase activity is Ser-644. Residues 939–1069 (HDLCGIRVED…GSVLAGTPSD (131 aa)) form an N-terminal hotdog fold region. One can recognise a PKS/mFAS DH domain in the interval 939-1238 (HDLCGIRVED…LATLSVRSGD (300 aa)). The interval 940–1236 (DLCGIRVEDD…LELATLSVRS (297 aa)) is dehydratase (DH) domain. His-971 functions as the Proton acceptor; for dehydratase activity in the catalytic mechanism. The interval 1087–1238 (YVETTPRQAY…LATLSVRSGD (152 aa)) is C-terminal hotdog fold. The Proton donor; for dehydratase activity role is filled by Asp-1152. Residues 1414 to 1592 (SSYLRLHARN…DTGFSGVDIS (179 aa)) are methyltransferase (CMet) domain. The tract at residues 1832-2133 (LRFVQDPAYW…SGGAKPGCSR (302 aa)) is enoyl reductase (ER) domain. The interval 2156–2331 (HGRALVPDFH…AGVSLSLGFI (176 aa)) is ketoreductase (KR) domain. One can recognise a Carrier domain in the interval 2444 to 2521 (AAATAVLDAL…ELARDLALRS (78 aa)). Ser-2481 carries the post-translational modification O-(pantetheine 4'-phosphoryl)serine.

The protein operates within secondary metabolite biosynthesis; terpenoid biosynthesis. Its function is as follows. Highly reducing polyketide synthase; part of the gene cluster that mediates the biosynthesis of calidodehydroaustin, a fungal meroterpenoid. The first step of the pathway is the synthesis of 3,5-dimethylorsellinic acid by the polyketide synthase ausA. 3,5-dimethylorsellinic acid is then prenylated by the polyprenyl transferase ausN. Further epoxidation by the FAD-dependent monooxygenase ausM and cyclization by the probable terpene cyclase ausL lead to the formation of protoaustinoid A. Protoaustinoid A is then oxidized to spiro-lactone preaustinoid A3 by the combined action of the FAD-binding monooxygenases ausB and ausC, and the dioxygenase ausE. Acid-catalyzed keto-rearrangement and ring contraction of the tetraketide portion of preaustinoid A3 by ausJ lead to the formation of preaustinoid A4. The aldo-keto reductase ausK, with the help of ausH, is involved in the next step by transforming preaustinoid A4 into isoaustinone which is in turn hydroxylated by the P450 monooxygenase ausI to form austinolide. The cytochrome P450 monooxygenase ausG modifies austinolide to austinol. Austinol is further acetylated to austin by the O-acetyltransferase ausP, which spontaneously changes to dehydroaustin. The cytochrome P450 monooxygenase ausR then converts dehydroaustin is into 7-dehydrodehydroaustin. The hydroxylation catalyzed by ausR permits the O-acetyltransferase ausQ to add an additional acetyl group to the molecule, leading to the formation of acetoxydehydroaustin. The short chain dehydrogenase ausT catalyzes the reduction of the double bond present between carbon atoms 1 and 2 to convert 7-dehydrodehydroaustin into 1,2-dihydro-7-hydroxydehydroaustin. AusQ catalyzes not only an acetylation reaction but also the addition of the PKS ausV diketide product to 1,2-dihydro-7-hydroxydehydroaustin, forming precalidodehydroaustin. Finally, the iron/alpha-ketoglutarate-dependent dioxygenase converts precalidodehydroaustin into calidodehydroaustin. The protein is Highly reducing polyketide synthase ausV of Aspergillus calidoustus.